The chain runs to 167 residues: Peptide deformylase (167 aa).

The Fe cation site is built by Cys91 and His133. Residue Glu134 is part of the active site. Residue His137 participates in Fe cation binding.

Belongs to the polypeptide deformylase family. Fe(2+) is required as a cofactor.

It carries out the reaction N-terminal N-formyl-L-methionyl-[peptide] + H2O = N-terminal L-methionyl-[peptide] + formate. In terms of biological role, removes the formyl group from the N-terminal Met of newly synthesized proteins. Requires at least a dipeptide for an efficient rate of reaction. N-terminal L-methionine is a prerequisite for activity but the enzyme has broad specificity at other positions. In Neisseria meningitidis serogroup C (strain 053442), this protein is Peptide deformylase.